A 126-amino-acid polypeptide reads, in one-letter code: Large ribosomal subunit protein bL20 (126 aa).

The protein belongs to the bacterial ribosomal protein bL20 family.

Its function is as follows. Binds directly to 23S ribosomal RNA and is necessary for the in vitro assembly process of the 50S ribosomal subunit. It is not involved in the protein synthesizing functions of that subunit. The chain is Large ribosomal subunit protein bL20 from Frankia casuarinae (strain DSM 45818 / CECT 9043 / HFP020203 / CcI3).